The sequence spans 84 residues: Small ribosomal subunit protein uS17 (84 aa).

It belongs to the universal ribosomal protein uS17 family. As to quaternary structure, part of the 30S ribosomal subunit.

One of the primary rRNA binding proteins, it binds specifically to the 5'-end of 16S ribosomal RNA. This Actinobacillus pleuropneumoniae serotype 5b (strain L20) protein is Small ribosomal subunit protein uS17.